A 127-amino-acid polypeptide reads, in one-letter code: Cliotide T3 (127 aa).

The first 24 residues, 1–24, serve as a signal peptide directing secretion; it reads MAYVRLTSLAVLFFLAASVMKTEG. Positions 25–53 form a cross-link, cyclopeptide (Gly-Asn); it reads GLPTCGETCTLGTCYVPDCSCSWPICMKN. Intrachain disulfides connect C29/C43, C33/C45, and C38/C50. Positions 54 to 127 are cleaved as a propeptide — removed in mature form; that stretch reads HIIAANAKTV…DLKMPLESTN (74 aa).

Post-translationally, contains 3 disulfide bonds. This is a cyclic peptide. As to expression, expressed in flower, stem, shoot, leaf and seed but not in root, pod and nodule (at protein level).

Its function is as follows. Probably participates in a plant defense mechanism. Not active against Gram-negative bacteria E.coli ATCC 700926, K.pneumoniae ATTC 13883 and P.aeruginosa ATCC 39018 at concentration up to 100 uM. Has cytotoxic and hemolytic activity. The protein is Cliotide T3 of Clitoria ternatea (Butterfly pea).